The chain runs to 349 residues: D-alanine--D-alanine ligase (349 aa).

Residues 140–345 enclose the ATP-grasp domain; that stretch reads NILFEAMGIP…MKDVFTWLLE (206 aa). Residue 169–224 coordinates ATP; sequence NLSFSYPVFIKPTLGGSSVNTGMAKTAEEAMTLVDKIFVTDDRVLVQKLVSGTEVS. Asp300, Glu312, and Asn314 together coordinate Mg(2+).

The protein belongs to the D-alanine--D-alanine ligase family. The cofactor is Mg(2+). Mn(2+) serves as cofactor.

It localises to the cytoplasm. The enzyme catalyses 2 D-alanine + ATP = D-alanyl-D-alanine + ADP + phosphate + H(+). It participates in cell wall biogenesis; peptidoglycan biosynthesis. Its function is as follows. Cell wall formation. The chain is D-alanine--D-alanine ligase from Leptospira biflexa serovar Patoc (strain Patoc 1 / Ames).